We begin with the raw amino-acid sequence, 397 residues long: Tryptophan synthase beta chain (397 aa).

Position 91 is an N6-(pyridoxal phosphate)lysine (K91).

Belongs to the TrpB family. Tetramer of two alpha and two beta chains. The cofactor is pyridoxal 5'-phosphate.

It catalyses the reaction (1S,2R)-1-C-(indol-3-yl)glycerol 3-phosphate + L-serine = D-glyceraldehyde 3-phosphate + L-tryptophan + H2O. It participates in amino-acid biosynthesis; L-tryptophan biosynthesis; L-tryptophan from chorismate: step 5/5. Functionally, the beta subunit is responsible for the synthesis of L-tryptophan from indole and L-serine. In Bacillus cereus (strain AH187), this protein is Tryptophan synthase beta chain.